The following is a 228-amino-acid chain: MSDSAVQRSSGRGRFITFEGGEGTGKSTQIKKLADRLKAARMRTLVTREPGGSPGAEIMRHLVLSGMGKLLGPEAETLLFAAARDDHVHTVIEPALKQGIWVLCDRFADSTRAYQGSLGSVSPGLINAMQRVTIGDLKPDLTIILDLPVEIGLQRAAARRGSGTPDRFEGEQLSFHQGLREAYRKIAADEPARCVLIDANSDPDTVAGRVWSALRDRLLPTPASVVSV.

The span at 1–10 shows a compositional bias: polar residues; that stretch reads MSDSAVQRSS. Positions 1 to 23 are disordered; it reads MSDSAVQRSSGRGRFITFEGGEG. 20–27 is an ATP binding site; it reads GGEGTGKS.

This sequence belongs to the thymidylate kinase family.

The enzyme catalyses dTMP + ATP = dTDP + ADP. Its function is as follows. Phosphorylation of dTMP to form dTDP in both de novo and salvage pathways of dTTP synthesis. This Bradyrhizobium diazoefficiens (strain JCM 10833 / BCRC 13528 / IAM 13628 / NBRC 14792 / USDA 110) protein is Thymidylate kinase.